We begin with the raw amino-acid sequence, 514 residues long: Glutamyl-tRNA(Gln) amidotransferase subunit B, mitochondrial (514 aa).

This sequence belongs to the GatB/GatE family. GatB subfamily. As to quaternary structure, subunit of the heterotrimeric GatCAB amidotransferase (AdT) complex, composed of A, B and C subunits.

Its subcellular location is the mitochondrion. It catalyses the reaction L-glutamyl-tRNA(Gln) + L-glutamine + ATP + H2O = L-glutaminyl-tRNA(Gln) + L-glutamate + ADP + phosphate + H(+). Functionally, allows the formation of correctly charged Gln-tRNA(Gln) through the transamidation of misacylated Glu-tRNA(Gln) in the mitochondria. The reaction takes place in the presence of glutamine and ATP through an activated gamma-phospho-Glu-tRNA(Gln). The sequence is that of Glutamyl-tRNA(Gln) amidotransferase subunit B, mitochondrial from Naegleria gruberi (Amoeba).